An 890-amino-acid chain; its full sequence is Probable LRR receptor-like serine/threonine-protein kinase At1g51860 (890 aa).

An N-terminal signal peptide occupies residues M1 to A23. Residues Q24 to A513 are Extracellular-facing. 13 N-linked (GlcNAc...) asparagine glycosylation sites follow: N49, N96, N142, N181, N256, N285, N289, N295, N312, N332, N340, N402, and N419. 3 LRR repeats span residues R412–T435, L436–M458, and S460–L481. N-linked (GlcNAc...) asparagine glycans are attached at residues N465, N473, and N497. A helical membrane pass occupies residues I514–I534. Residues K535–R890 lie on the Cytoplasmic side of the membrane. Position 575 is a phosphothreonine (T575). The Protein kinase domain occupies N584–V856. Residues L590–V598 and K611 contribute to the ATP site. A Phosphotyrosine modification is found at Y656. The Proton acceptor role is filled by D708. At S742 the chain carries Phosphoserine. Residues T743 and T748 each carry the phosphothreonine modification. A Phosphotyrosine modification is found at Y756.

It belongs to the protein kinase superfamily. Ser/Thr protein kinase family.

The protein resides in the membrane. The catalysed reaction is L-seryl-[protein] + ATP = O-phospho-L-seryl-[protein] + ADP + H(+). It catalyses the reaction L-threonyl-[protein] + ATP = O-phospho-L-threonyl-[protein] + ADP + H(+). This is Probable LRR receptor-like serine/threonine-protein kinase At1g51860 from Arabidopsis thaliana (Mouse-ear cress).